A 114-amino-acid polypeptide reads, in one-letter code: Iron-sulfur cluster insertion protein ErpA (114 aa).

Iron-sulfur cluster-binding residues include cysteine 42, cysteine 106, and cysteine 108.

This sequence belongs to the HesB/IscA family. In terms of assembly, homodimer. Iron-sulfur cluster is required as a cofactor.

Its function is as follows. Required for insertion of 4Fe-4S clusters for at least IspG. This Citrobacter koseri (strain ATCC BAA-895 / CDC 4225-83 / SGSC4696) protein is Iron-sulfur cluster insertion protein ErpA.